The sequence spans 313 residues: uncharacterized protein (313 aa).

6 consecutive transmembrane segments (helical) span residues 16–36 (AGTW…AFLA), 106–126 (FTIL…ANEF), 155–175 (FGLL…LIFF), 208–228 (LSES…SAVF), 233–253 (LAVG…AFIA), and 286–306 (FSLV…FGIF).

It is found in the cell membrane. This is an uncharacterized protein from Bacillus subtilis (strain 168).